The chain runs to 500 residues: Glucose-6-phosphate 1-dehydrogenase (500 aa).

Residues 18 to 25 (GASGDLSK), R52, and K155 contribute to the NADP(+) site. Residues K155, 185–189 (HYLGK), E223, and D242 contribute to the D-glucose 6-phosphate site. H247 functions as the Proton acceptor in the catalytic mechanism. Residue K338 participates in NADP(+) binding. K341 contributes to the D-glucose 6-phosphate binding site. Positions 347, 351, and 373 each coordinate NADP(+). Q375 contacts D-glucose 6-phosphate. Residues 381-383 (YFK), 401-403 (DLT), and Y483 contribute to the NADP(+) site.

It belongs to the glucose-6-phosphate dehydrogenase family.

Its subcellular location is the cytoplasm. It is found in the cytosol. It catalyses the reaction D-glucose 6-phosphate + NADP(+) = 6-phospho-D-glucono-1,5-lactone + NADPH + H(+). It functions in the pathway carbohydrate degradation; pentose phosphate pathway; D-ribulose 5-phosphate from D-glucose 6-phosphate (oxidative stage): step 1/3. In terms of biological role, catalyzes the rate-limiting step of the oxidative pentose-phosphate pathway, which represents a route for the dissimilation of carbohydrates besides glycolysis. The main function of this enzyme is to provide reducing power (NADPH) and pentose phosphates for fatty acid and nucleic acid synthesis. The protein is Glucose-6-phosphate 1-dehydrogenase of Schizosaccharomyces pombe (strain 972 / ATCC 24843) (Fission yeast).